Reading from the N-terminus, the 259-residue chain is L-cysteine S-thiosulfotransferase subunit SoxA (259 aa).

A signal peptide spans 1-23; that stretch reads MRKLWFLPILLGAVGGVSLYAIA. A Cytochrome c domain is found at 50–135; sequence VYAEQGRDMF…SIATYVATLS (86 aa). Heme c is bound by residues Cys-70, Cys-73, His-74, Cys-108, Cys-171, Cys-174, and His-175. Residue Arg-216 coordinates substrate. Cys-220 provides a ligand contact to heme c. Cys-220 (cysteine persulfide intermediate) is an active-site residue.

Belongs to the SoxA family. As to quaternary structure, heterodimer of SoxA and SoxX. The cofactor is heme c. In terms of processing, cysteine persulfide at Cys-220.

It is found in the periplasm. The enzyme catalyses L-cysteinyl-[SoxY protein] + thiosulfate + 2 Fe(III)-[cytochrome c] = S-sulfosulfanyl-L-cysteinyl-[SoxY protein] + 2 Fe(II)-[cytochrome c] + 2 H(+). It carries out the reaction S-sulfanyl-L-cysteinyl-[SoxY protein] + thiosulfate + 2 Fe(III)-[cytochrome c] = S-(2-sulfodisulfanyl)-L-cysteinyl-[SoxY protein] + 2 Fe(II)-[cytochrome c] + 2 H(+). Functionally, C-type diheme cytochrome, which is part of the SoxAX cytochrome complex involved in sulfur oxidation. The SoxAX complex catalyzes the formation of a heterodisulfide bond between the conserved cysteine residue on a sulfur carrier SoxYZ complex subunit SoxY and thiosulfate or other inorganic sulfur substrates. This leads to the liberation of two electrons, which may be transferred from the SoxAX complex to another cytochrome c that then channels them into the respiratory electron transport chain. Some electrons may be used for reductive CO(2) fixation. This chain is L-cysteine S-thiosulfotransferase subunit SoxA, found in Hydrogenobacter thermophilus (strain DSM 6534 / IAM 12695 / TK-6).